Consider the following 579-residue polypeptide: Adipocyte plasma membrane-associated protein Hemomucin (579 aa).

The Cytoplasmic segment spans residues 1-6 (MGLLYA). The helical transmembrane segment at 7-29 (LRVRIMNFMIFFLLIILMPGLPP) threads the bilayer. The Extracellular portion of the chain corresponds to 30–579 (RTTFPFKDYI…INKQGVNVEL (550 aa)). Asn-213 and Asn-217 each carry an N-linked (GlcNAc...) asparagine glycan. Positions 427–579 (GLEASIGVPP…INKQGVNVEL (153 aa)) are disordered. A compositionally biased stretch (low complexity) spans 435-529 (PPSKATPKPK…PKPTTTTTPT (95 aa)).

This sequence belongs to the strictosidine synthase family. As to quaternary structure, interacts with sturkopf. In terms of processing, O-glycosylated. Glycosylated in the ovary of 4 day old females. Phosphorylated. As to expression, detected in ovaries (at protein level). In larvae, detected in the fat body, salivary glands, imaginal disks and gut (at protein level). In adults, expressed in the cardia, and in regions of the ventriculus including the area posterior to the cardia. In females also expressed in follicle cells.

It localises to the cell membrane. Functionally, transmembrane mucin that may be involved in cellular adhesion and the innate immune response. Membrane-tethered mucins are involved in many cell surface functions and form a physical barrier around cells to regulate cell-cell and/or cell-substrate interactions, and protect against pathogens or harmful extracellular conditions. This mucin likely acts in hemocyte adhesion as it is released from hemocytes during coagulation and is also able to bind lipophorin particles which form part of the hemocyte coagulogen. Able to induce expression of the antibacterial proteins in the presence of GalNAc-specific lectins and so probably also functions in the innate immune response. The sequence is that of Adipocyte plasma membrane-associated protein Hemomucin from Drosophila melanogaster (Fruit fly).